Here is a 216-residue protein sequence, read N- to C-terminus: Ras-related protein RABE1a (216 aa).

GTP is bound at residue 22–29 (GDSGVGKS). Residues 44 to 52 (FITTIGIDF) carry the Effector region motif. Residues 70-74 (DTAGQ), 128-131 (NKAD), and 159-160 (SA) each bind GTP. Residues 185-216 (DARAEPQTIKINQSDQGAGTSQATQKSACCGT) form a disordered region. Residues 193 to 216 (IKINQSDQGAGTSQATQKSACCGT) are compositionally biased toward polar residues. Residues Cys213 and Cys214 are each lipidated (S-geranylgeranyl cysteine).

It belongs to the small GTPase superfamily. Rab family. Interacts with PI5K2.

It localises to the golgi apparatus membrane. The protein localises to the cell membrane. Involved in membrane trafficking from the Golgi to the plasma membrane. In Arabidopsis thaliana (Mouse-ear cress), this protein is Ras-related protein RABE1a (RABE1A).